The sequence spans 228 residues: Cytidylate kinase (228 aa).

Residue G12–T20 participates in ATP binding.

Belongs to the cytidylate kinase family. Type 1 subfamily.

The protein localises to the cytoplasm. It catalyses the reaction CMP + ATP = CDP + ADP. The enzyme catalyses dCMP + ATP = dCDP + ADP. This is Cytidylate kinase from Lactiplantibacillus plantarum (strain ATCC BAA-793 / NCIMB 8826 / WCFS1) (Lactobacillus plantarum).